A 385-amino-acid chain; its full sequence is 4-hydroxy-3-methylbut-2-en-1-yl diphosphate synthase (flavodoxin) (385 aa).

Positions 282, 285, 317, and 324 each coordinate [4Fe-4S] cluster.

Belongs to the IspG family. The cofactor is [4Fe-4S] cluster.

It catalyses the reaction (2E)-4-hydroxy-3-methylbut-2-enyl diphosphate + oxidized [flavodoxin] + H2O + 2 H(+) = 2-C-methyl-D-erythritol 2,4-cyclic diphosphate + reduced [flavodoxin]. Its pathway is isoprenoid biosynthesis; isopentenyl diphosphate biosynthesis via DXP pathway; isopentenyl diphosphate from 1-deoxy-D-xylulose 5-phosphate: step 5/6. In terms of biological role, converts 2C-methyl-D-erythritol 2,4-cyclodiphosphate (ME-2,4cPP) into 1-hydroxy-2-methyl-2-(E)-butenyl 4-diphosphate. This chain is 4-hydroxy-3-methylbut-2-en-1-yl diphosphate synthase (flavodoxin), found in Nocardia farcinica (strain IFM 10152).